The sequence spans 400 residues: Nicotinate phosphoribosyltransferase (400 aa).

Histidine 220 bears the Phosphohistidine; by autocatalysis mark.

This sequence belongs to the NAPRTase family. Post-translationally, transiently phosphorylated on a His residue during the reaction cycle. Phosphorylation strongly increases the affinity for substrates and increases the rate of nicotinate D-ribonucleotide production. Dephosphorylation regenerates the low-affinity form of the enzyme, leading to product release.

It carries out the reaction nicotinate + 5-phospho-alpha-D-ribose 1-diphosphate + ATP + H2O = nicotinate beta-D-ribonucleotide + ADP + phosphate + diphosphate. Its pathway is cofactor biosynthesis; NAD(+) biosynthesis; nicotinate D-ribonucleotide from nicotinate: step 1/1. Catalyzes the synthesis of beta-nicotinate D-ribonucleotide from nicotinate and 5-phospho-D-ribose 1-phosphate at the expense of ATP. The chain is Nicotinate phosphoribosyltransferase from Escherichia coli O17:K52:H18 (strain UMN026 / ExPEC).